The chain runs to 276 residues: Large ribosomal subunit protein uL2 (276 aa).

The tract at residues 212 to 276 (NRHRGIRPQT…KLIISRKKHK (65 aa)) is disordered. Basic residues predominate over residues 257-276 (YKTRKKKASDKLIISRKKHK).

This sequence belongs to the universal ribosomal protein uL2 family. In terms of assembly, part of the 50S ribosomal subunit. Forms a bridge to the 30S subunit in the 70S ribosome.

One of the primary rRNA binding proteins. Required for association of the 30S and 50S subunits to form the 70S ribosome, for tRNA binding and peptide bond formation. It has been suggested to have peptidyltransferase activity; this is somewhat controversial. Makes several contacts with the 16S rRNA in the 70S ribosome. This is Large ribosomal subunit protein uL2 from Helicobacter acinonychis (strain Sheeba).